Consider the following 692-residue polypeptide: Putative ESX-1 scaffolding and assembly protein SaeA (692 aa).

Positions 1–21 (MGERGELVSDLHPSDDHDADP) are enriched in basic and acidic residues. Disordered regions lie at residues 1-23 (MGERGELVSDLHPSDDHDADPRL) and 87-134 (PAAP…TTGF). A compositionally biased stretch (pro residues) spans 89–107 (APEPDPPPVPEPQPEPEPG).

In terms of biological role, may be involved in assembly of the ESX-1 / type VII specialized secretion system (T7SS), which exports several proteins including EsxA and EsxB. Involved in DNA conjugation in recipient (MKD8) but not donor (mc(2)155) strain. This Mycolicibacterium smegmatis (strain MKD8) (Mycobacterium smegmatis) protein is Putative ESX-1 scaffolding and assembly protein SaeA (saeA).